Here is a 193-residue protein sequence, read N- to C-terminus: Cysteine and glycine-rich protein 2 (193 aa).

One can recognise an LIM zinc-binding 1 domain in the interval 10-61 (CGACGRTVYHAEEVQCDGRTFHRCCFLCMVCRKNLDSTTVAIHDEEIYCKSC). A Nuclear localization signal motif is present at residues 64-69 (KKYGPK). Lysine 91 participates in a covalent cross-link: Glycyl lysine isopeptide (Lys-Gly) (interchain with G-Cter in SUMO2). N6-acetyllysine occurs at positions 112 and 131. Positions 119–170 (CSRCGDSVYAAEKIIGAGKPWHKNCFRCAKCGKSLESTTLTEKEGEIYCKGC) constitute an LIM zinc-binding 2 domain. An N6-acetyllysine; alternate modification is found at lysine 137. At lysine 137 the chain carries N6-succinyllysine; alternate. At lysine 161 the chain carries N6-acetyllysine.

Interacts with KAT14. The LIM domain 1 is necessary and sufficient for this interaction. Interacts with GLRX3. As to expression, highly expressed in the aorta; weakly found in the kidney, thymus, and intestine. Barely detectable in brain, testis, esophagus, lung, liver, aortic adventitia, vena cava, or uterus; not present in heart and skeletal muscle.

The protein resides in the nucleus. Drastically down-regulated in response to PDGF-BB or cell injury, that promote smooth muscle cell proliferation and dedifferentiation. Seems to play a role in the development of the embryonic vascular system. In Rattus norvegicus (Rat), this protein is Cysteine and glycine-rich protein 2 (Csrp2).